We begin with the raw amino-acid sequence, 476 residues long: Vitamin D-binding protein (476 aa).

The first 16 residues, methionine 1–alanine 16, serve as a signal peptide directing secretion. Albumin domains follow at residues leucine 17–glutamine 208, leucine 209–arginine 394, and glutamine 395–serine 476. 14 disulfides stabilise this stretch: cysteine 29-cysteine 75, cysteine 74-cysteine 83, cysteine 96-cysteine 112, cysteine 111-cysteine 122, cysteine 145-cysteine 190, cysteine 189-cysteine 198, cysteine 220-cysteine 266, cysteine 265-cysteine 273, cysteine 286-cysteine 300, cysteine 299-cysteine 311, cysteine 335-cysteine 376, cysteine 375-cysteine 384, cysteine 407-cysteine 453, and cysteine 452-cysteine 462. The N-linked (GlcNAc...) asparagine glycan is linked to asparagine 288. Serine 434 carries the phosphoserine modification.

This sequence belongs to the ALB/AFP/VDB family. Associates with membrane-bound immunoglobulin on the surface of B-lymphocytes and with IgG Fc receptor on the membranes of T-lymphocytes. Interacts with LRP2; the interaction is required for renal uptake of GC in complex with 25-hydroxyvitamin D3.

The protein resides in the secreted. Involved in vitamin D transport and storage, scavenging of extracellular G-actin, enhancement of the chemotactic activity of C5 alpha for neutrophils in inflammation and macrophage activation. The protein is Vitamin D-binding protein (Gc) of Rattus norvegicus (Rat).